Consider the following 568-residue polypeptide: Urease subunit alpha (568 aa).

The Urease domain maps to 131-568 (GGMDAHIHFI…LPLAQRYFLY (438 aa)). The Ni(2+) site is built by His-136, His-138, and Lys-219. An N6-carboxylysine modification is found at Lys-219. His-221 is a binding site for substrate. Ni(2+)-binding residues include His-248 and His-274. Catalysis depends on His-322, which acts as the Proton donor. Asp-362 contacts Ni(2+).

Belongs to the metallo-dependent hydrolases superfamily. Urease alpha subunit family. Heterotrimer of UreA (gamma), UreB (beta) and UreC (alpha) subunits. Three heterotrimers associate to form the active enzyme. It depends on Ni cation as a cofactor. Post-translationally, carboxylation allows a single lysine to coordinate two nickel ions.

Its subcellular location is the cytoplasm. It carries out the reaction urea + 2 H2O + H(+) = hydrogencarbonate + 2 NH4(+). It functions in the pathway nitrogen metabolism; urea degradation; CO(2) and NH(3) from urea (urease route): step 1/1. This chain is Urease subunit alpha, found in Cereibacter sphaeroides (strain KD131 / KCTC 12085) (Rhodobacter sphaeroides).